A 391-amino-acid polypeptide reads, in one-letter code: 1-deoxy-D-xylulose 5-phosphate reductoisomerase (391 aa).

NADPH is bound by residues Thr11, Gly12, Ser13, Ile14, and Asn126. Lys127 is a binding site for 1-deoxy-D-xylulose 5-phosphate. Residue Glu128 coordinates NADPH. Mn(2+) is bound at residue Asp152. 4 residues coordinate 1-deoxy-D-xylulose 5-phosphate: Ser153, Glu154, Ser176, and His199. Glu154 contributes to the Mn(2+) binding site. Gly205 is an NADPH binding site. Residues Ser212, Asn217, Lys218, and Glu221 each coordinate 1-deoxy-D-xylulose 5-phosphate. Glu221 is a Mn(2+) binding site.

Belongs to the DXR family. Requires Mg(2+) as cofactor. The cofactor is Mn(2+).

The enzyme catalyses 2-C-methyl-D-erythritol 4-phosphate + NADP(+) = 1-deoxy-D-xylulose 5-phosphate + NADPH + H(+). The protein operates within isoprenoid biosynthesis; isopentenyl diphosphate biosynthesis via DXP pathway; isopentenyl diphosphate from 1-deoxy-D-xylulose 5-phosphate: step 1/6. Its function is as follows. Catalyzes the NADPH-dependent rearrangement and reduction of 1-deoxy-D-xylulose-5-phosphate (DXP) to 2-C-methyl-D-erythritol 4-phosphate (MEP). The sequence is that of 1-deoxy-D-xylulose 5-phosphate reductoisomerase from Acidithiobacillus ferrooxidans (strain ATCC 53993 / BNL-5-31) (Leptospirillum ferrooxidans (ATCC 53993)).